We begin with the raw amino-acid sequence, 123 residues long: uncharacterized protein (123 aa).

2 helical membrane passes run 55-77 (LLIH…STIL) and 92-114 (FFIN…TIVY).

It localises to the cell membrane. This is an uncharacterized protein from Pasteurella multocida (strain Pm70).